We begin with the raw amino-acid sequence, 340 residues long: Probable cyclic nucleotide phosphodiesterase PsycPRwf_0181 (340 aa).

The interval 1 to 36 is disordered; the sequence is MAPLPHSVSPRHTQVADNGRLSEPTDYHPPTEISTD. Residues Asp47, His49, Asp128, Asn158, His237, His276, and His278 each contribute to the Fe cation site. AMP contacts are provided by residues His49, Asp128, and 158–159; that span reads NH. An AMP-binding site is contributed by His278.

It belongs to the cyclic nucleotide phosphodiesterase class-III family. Fe(2+) serves as cofactor.

The sequence is that of Probable cyclic nucleotide phosphodiesterase PsycPRwf_0181 from Psychrobacter sp. (strain PRwf-1).